We begin with the raw amino-acid sequence, 315 residues long: Apolipoprotein F (315 aa).

Residues 1-24 (MHSLRLILMSIQLLCYLLLCPVDA) form the signal peptide. A propeptide spanning residues 25–154 (TSHGEATSVS…EQPGPKRAKR (130 aa)) is cleaved from the precursor.

The protein belongs to the apolipoprotein F family. Liver.

Its subcellular location is the secreted. Minor apolipoprotein that associates with LDL. Inhibits cholesteryl ester transfer protein (CETP) activity and appears to be an important regulator of cholesterol transport. Also associates to a lesser degree with VLDL, Apo-AI and Apo-AII. The chain is Apolipoprotein F (Apof) from Mus musculus (Mouse).